Consider the following 169-residue polypeptide: Gametocyte-specific factor 1-like (169 aa).

2 consecutive CHHC U11-48K-type zinc fingers follow at residues 6-33 (LETC…RRKN) and 40-67 (MASC…VNKS). Cys-9, His-15, His-25, Cys-29, Cys-43, His-49, His-59, and Cys-63 together coordinate Zn(2+). Disordered stretches follow at residues 67 to 103 (STME…LPNP) and 131 to 169 (SDTR…LLKA). The span at 131–158 (SDTRESETDDHNPIPDCPRRRSSDRESE) shows a compositional bias: basic and acidic residues.

It belongs to the UPF0224 (FAM112) family.

The protein is Gametocyte-specific factor 1-like (GTSF1L) of Bos taurus (Bovine).